The chain runs to 356 residues: UDP-N-acetylglucosamine--N-acetylmuramyl-(pentapeptide) pyrophosphoryl-undecaprenol N-acetylglucosamine transferase (356 aa).

Residues 11 to 13 (TGG), Asn-123, Arg-159, Ser-187, Ile-241, 260 to 265 (ALTVAE), and Gln-286 contribute to the UDP-N-acetyl-alpha-D-glucosamine site.

It belongs to the glycosyltransferase 28 family. MurG subfamily.

It localises to the cell inner membrane. The enzyme catalyses di-trans,octa-cis-undecaprenyl diphospho-N-acetyl-alpha-D-muramoyl-L-alanyl-D-glutamyl-meso-2,6-diaminopimeloyl-D-alanyl-D-alanine + UDP-N-acetyl-alpha-D-glucosamine = di-trans,octa-cis-undecaprenyl diphospho-[N-acetyl-alpha-D-glucosaminyl-(1-&gt;4)]-N-acetyl-alpha-D-muramoyl-L-alanyl-D-glutamyl-meso-2,6-diaminopimeloyl-D-alanyl-D-alanine + UDP + H(+). It functions in the pathway cell wall biogenesis; peptidoglycan biosynthesis. In terms of biological role, cell wall formation. Catalyzes the transfer of a GlcNAc subunit on undecaprenyl-pyrophosphoryl-MurNAc-pentapeptide (lipid intermediate I) to form undecaprenyl-pyrophosphoryl-MurNAc-(pentapeptide)GlcNAc (lipid intermediate II). This chain is UDP-N-acetylglucosamine--N-acetylmuramyl-(pentapeptide) pyrophosphoryl-undecaprenol N-acetylglucosamine transferase, found in Azoarcus sp. (strain BH72).